A 541-amino-acid polypeptide reads, in one-letter code: MAGAIIENMGTKKLCIVGGILLVFQIIAFLVGGLIAPGPTTAVSYMSVKCVDARKNHHKTKWFVPWGPNHCDKIRDIEEAIPREIEANDIVFSVHIPLPHMEMSPWFQFMLFILQLDIAFKLNNQIRENAEVSMDVSLAYRDDAFAEWTEMAHERVPRKLKCTFTSPKTPEHEGRYYECDVLPFMEIGSVAHKFYLLNIRLPVNEKKKINVGIGEIKDIRLVGIHQNGGFTKVWFAMKTFLTPSIFIIMVWYWRRITMMSRPPVLLEKVIFALGISMTFINIPVEWFSIGFDWTWMLLFGDIRQGIFYAMLLSFWIIFCGEHMMDQHERNHIAGYWKQVGPIAVGSFCLFIFDMCERGVQLTNPFYSIWTTDIGTELAMAFIIVAGICLCLYFLFLCFMVFQVFRNISGKQSSLPAMSKVRRLHYEGLIFRFKFLMLITLACAAMTVIFFIVSQVTEGHWKWGGVTVQVNSAFFTGIYGMWNLYVFALMFLYAPSHKNYGEDQSNGDLGVHSGEELQLTTTITHVDGPTEIYKLTRKEAQE.

At 1 to 15 (MAGAIIENMGTKKLC) the chain is on the cytoplasmic side. Residues 16-36 (IVGGILLVFQIIAFLVGGLIA) form a helical membrane-spanning segment. The Lumenal portion of the chain corresponds to 37–232 (PGPTTAVSYM…GIHQNGGFTK (196 aa)). Residues 101–232 (MEMSPWFQFM…GIHQNGGFTK (132 aa)) form an interaction with Wnt proteins region. The helical transmembrane segment at 233-253 (VWFAMKTFLTPSIFIIMVWYW) threads the bilayer. Residues 254 to 268 (RRITMMSRPPVLLEK) are Cytoplasmic-facing. The helical transmembrane segment at 269–289 (VIFALGISMTFINIPVEWFSI) threads the bilayer. The Lumenal segment spans residues 290–303 (GFDWTWMLLFGDIR). The helical transmembrane segment at 304–324 (QGIFYAMLLSFWIIFCGEHMM) threads the bilayer. At 325–331 (DQHERNH) the chain is on the cytoplasmic side. Residues 332-352 (IAGYWKQVGPIAVGSFCLFIF) form a helical membrane-spanning segment. At 353-380 (DMCERGVQLTNPFYSIWTTDIGTELAMA) the chain is on the lumenal side. A helical transmembrane segment spans residues 381 to 401 (FIIVAGICLCLYFLFLCFMVF). The Cytoplasmic portion of the chain corresponds to 402–431 (QVFRNISGKQSSLPAMSKVRRLHYEGLIFR). The helical transmembrane segment at 432–452 (FKFLMLITLACAAMTVIFFIV) threads the bilayer. The Lumenal segment spans residues 453–471 (SQVTEGHWKWGGVTVQVNS). The helical transmembrane segment at 472 to 492 (AFFTGIYGMWNLYVFALMFLY) threads the bilayer. At 493–541 (APSHKNYGEDQSNGDLGVHSGEELQLTTTITHVDGPTEIYKLTRKEAQE) the chain is on the cytoplasmic side.

The protein belongs to the wntless family. In terms of assembly, interacts with WNT3A. Interacts with WNT1, WNT3 and WNT5A.

Its subcellular location is the golgi apparatus membrane. The protein localises to the cytoplasmic vesicle membrane. It is found in the cell membrane. The protein resides in the endoplasmic reticulum membrane. It localises to the early endosome membrane. In terms of biological role, regulates Wnt proteins sorting and secretion in a feedback regulatory mechanism. This reciprocal interaction plays a key role in the regulation of expression, subcellular location, binding and organelle-specific association of Wnt proteins. Also plays an important role in establishment of the anterior-posterior body axis formation during development. The protein is Protein wntless homolog (WLS) of Pongo abelii (Sumatran orangutan).